A 213-amino-acid chain; its full sequence is MVPFFDKTQTVDQANALPGRTTPMPVATLNVVTDHSMTQVPDGLEVAIFAMGCFWGVERLFWQQQGVYSTAAGYSGGYTPNPTYREVCSGQTGHTEVVRVVFDPKIISYKQLLQVFWENHDPAQGMRQGGDVGTQYRSAIYTLTPEQQTEAESSLQRFQQAMEQAGDKRAITTEVAPALPFYYAEDDHQQYLYKNPEGYCGLGGIGVCLPPQG.

Cysteine 53 is a catalytic residue.

This sequence belongs to the MsrA Met sulfoxide reductase family.

It catalyses the reaction L-methionyl-[protein] + [thioredoxin]-disulfide + H2O = L-methionyl-(S)-S-oxide-[protein] + [thioredoxin]-dithiol. It carries out the reaction [thioredoxin]-disulfide + L-methionine + H2O = L-methionine (S)-S-oxide + [thioredoxin]-dithiol. In terms of biological role, has an important function as a repair enzyme for proteins that have been inactivated by oxidation. Catalyzes the reversible oxidation-reduction of methionine sulfoxide in proteins to methionine. In Serratia proteamaculans (strain 568), this protein is Peptide methionine sulfoxide reductase MsrA.